The sequence spans 126 residues: Fluoride-specific ion channel FluC (126 aa).

4 helical membrane-spanning segments follow: residues 7–24 (LWVS…YFLS), 35–55 (FPWG…LFLV), 69–89 (LLIA…AYES), and 98–118 (WGLF…AVLG). Residues Gly77 and Thr80 each coordinate Na(+).

It belongs to the fluoride channel Fluc/FEX (TC 1.A.43) family.

The protein resides in the cell inner membrane. The catalysed reaction is fluoride(in) = fluoride(out). With respect to regulation, na(+) is not transported, but it plays an essential structural role and its presence is essential for fluoride channel function. Fluoride-specific ion channel. Important for reducing fluoride concentration in the cell, thus reducing its toxicity. The chain is Fluoride-specific ion channel FluC from Koribacter versatilis (strain Ellin345).